The following is a 197-amino-acid chain: Probable proteasome subunit beta type-4 (197 aa).

The protein belongs to the peptidase T1B family. In terms of assembly, the 26S proteasome consists of a 20S proteasome core and two 19S regulatory subunits. The 20S proteasome core is composed of 28 subunits that are arranged in four stacked rings, resulting in a barrel-shaped structure. The two end rings are each formed by seven alpha subunits, and the two central rings are each formed by seven beta subunits. The catalytic chamber with the active sites is on the inside of the barrel.

It localises to the cytoplasm. The protein resides in the nucleus. Functionally, non-catalytic component of the proteasome which degrades poly-ubiquitinated proteins in the cytoplasm and in the nucleus. It is essential for the regulated turnover of proteins and for the removal of misfolded proteins. The proteasome is a multicatalytic proteinase complex that is characterized by its ability to cleave peptides with Arg, Phe, Tyr, Leu, and Glu adjacent to the leaving group at neutral or slightly basic pH. It has an ATP-dependent proteolytic activity. This chain is Probable proteasome subunit beta type-4 (PRE1), found in Encephalitozoon cuniculi (strain GB-M1) (Microsporidian parasite).